The primary structure comprises 411 residues: Arginine deiminase (411 aa).

C401 functions as the Amidino-cysteine intermediate in the catalytic mechanism.

Belongs to the arginine deiminase family.

Its subcellular location is the cytoplasm. The enzyme catalyses L-arginine + H2O = L-citrulline + NH4(+). Its pathway is amino-acid degradation; L-arginine degradation via ADI pathway; carbamoyl phosphate from L-arginine: step 1/2. This is Arginine deiminase from Staphylococcus epidermidis (strain ATCC 35984 / DSM 28319 / BCRC 17069 / CCUG 31568 / BM 3577 / RP62A).